A 155-amino-acid polypeptide reads, in one-letter code: WPP domain-containing protein 1 (155 aa).

Disordered regions lie at residues 1–41 and 124–155; these read MAET…VTIS and SVKA…SSEA. Positions 7-39 are enriched in low complexity; it reads ESITTSSPPPISETENSTTLPTTETEKNPNPVT. Positions 28-131 are WPP; that stretch reads TTETEKNPNP…LESVKAKSNV (104 aa). Residues 146–155 are compositionally biased toward basic and acidic residues; it reads VDSKIDSSEA.

In terms of assembly, binds to FPP proteins. Interacts with WAP, WIP1, WIP2 and WIP3 through its WPP domain. Interacts with HSP70-1, HSP70-3 and WIT1. Component of a ternary complex composed of WPP1, HSP70-1 and WIT1. Expressed in roots, stems and leaves.

The protein localises to the nucleus envelope. It localises to the cytoplasm. Its subcellular location is the nucleus. It is found in the golgi apparatus. The protein resides in the nucleus matrix. Functionally, regulates the mitotic activity in roots. Plays a role with HSP70-1 in facilitating WIT1 nuclear envelope targeting. The sequence is that of WPP domain-containing protein 1 (WPP1) from Arabidopsis thaliana (Mouse-ear cress).